Here is a 352-residue protein sequence, read N- to C-terminus: Phosphoribosylformylglycinamidine cyclo-ligase (352 aa).

It belongs to the AIR synthase family.

The protein localises to the cytoplasm. The catalysed reaction is 2-formamido-N(1)-(5-O-phospho-beta-D-ribosyl)acetamidine + ATP = 5-amino-1-(5-phospho-beta-D-ribosyl)imidazole + ADP + phosphate + H(+). It functions in the pathway purine metabolism; IMP biosynthesis via de novo pathway; 5-amino-1-(5-phospho-D-ribosyl)imidazole from N(2)-formyl-N(1)-(5-phospho-D-ribosyl)glycinamide: step 2/2. The polypeptide is Phosphoribosylformylglycinamidine cyclo-ligase (Pseudomonas savastanoi pv. phaseolicola (strain 1448A / Race 6) (Pseudomonas syringae pv. phaseolicola (strain 1448A / Race 6))).